A 74-amino-acid polypeptide reads, in one-letter code: Translation initiation factor IF-1 (74 aa).

The region spanning 1 to 72 (MAKETEMEFE…TRGRITYRKI (72 aa)) is the S1-like domain.

The protein belongs to the IF-1 family. As to quaternary structure, component of the 30S ribosomal translation pre-initiation complex which assembles on the 30S ribosome in the order IF-2 and IF-3, IF-1 and N-formylmethionyl-tRNA(fMet); mRNA recruitment can occur at any time during PIC assembly.

It is found in the cytoplasm. Functionally, one of the essential components for the initiation of protein synthesis. Stabilizes the binding of IF-2 and IF-3 on the 30S subunit to which N-formylmethionyl-tRNA(fMet) subsequently binds. Helps modulate mRNA selection, yielding the 30S pre-initiation complex (PIC). Upon addition of the 50S ribosomal subunit IF-1, IF-2 and IF-3 are released leaving the mature 70S translation initiation complex. This is Translation initiation factor IF-1 from Mycoplasma capricolum subsp. capricolum (strain California kid / ATCC 27343 / NCTC 10154).